The chain runs to 468 residues: Nuclear receptor ROR-alpha A (468 aa).

A DNA-binding region (nuclear receptor) is located at residues 15–90 (IIPCKICGDK…VGMSRDAVKF (76 aa)). 2 NR C4-type zinc fingers span residues 18-38 (CKIC…CEGC) and 54-73 (CPRQ…CQHC). Disordered regions lie at residues 101–129 (LYAE…PLTP) and 142–163 (HDDL…DSGV). The NR LBD domain occupies 217-455 (ELEHLAQNIS…AHFPPLYKEL (239 aa)). Residues 444-455 (VRAHFPPLYKEL) form an AF-2 region.

It belongs to the nuclear hormone receptor family. NR1 subfamily. Expressed in the brain, in cerebellar-like structures, including Purkinje cells.

The protein resides in the nucleus. Nuclear receptor that binds DNA as a monomer to ROR response elements (RORE). Required for proper cerebellum development. The protein is Nuclear receptor ROR-alpha A (roraa) of Danio rerio (Zebrafish).